Consider the following 64-residue polypeptide: Prokaryotic ubiquitin-like protein Pup (64 aa).

The disordered stretch occupies residues 1-37; sequence MAQEQTKRGGGGGEDDDLSGGAGAGQERREKLAEETD. The tract at residues 21 to 58 is ARC ATPase binding; it reads GAGAGQERREKLAEETDDLLDEIDDVLEENAEDFVRAY. Positions 24–52 form a coiled coil; it reads AGQERREKLAEETDDLLDEIDDVLEENAE. Gln-64 carries the post-translational modification Deamidated glutamine. An Isoglutamyl lysine isopeptide (Gln-Lys) (interchain with K-? in acceptor proteins) cross-link involves residue Gln-64.

Belongs to the prokaryotic ubiquitin-like protein family. Strongly interacts with the proteasome-associated ATPase ARC through a hydrophobic interface; the interacting region of Pup lies in its C-terminal half. There is one Pup binding site per ARC hexamer ring. Post-translationally, is modified by deamidation of its C-terminal glutamine to glutamate by the deamidase Dop, a prerequisite to the subsequent pupylation process.

It participates in protein degradation; proteasomal Pup-dependent pathway. Functionally, protein modifier that is covalently attached to lysine residues of substrate proteins, thereby targeting them for proteasomal degradation. The tagging system is termed pupylation. In Mycobacterium sp. (strain JLS), this protein is Prokaryotic ubiquitin-like protein Pup.